A 920-amino-acid chain; its full sequence is GTPase activating protein homolog 1 (920 aa).

Positions 65–87 (NLGGLSNDSTNNNSNSNNTIDSS) are enriched in low complexity. Residues 65 to 91 (NLGGLSNDSTNNNSNSNNTIDSSKPLS) are disordered. Positions 90–344 (LSFENDMSDG…FVDIIDPEVD (255 aa)) constitute an F-BAR domain. Residues 184–276 (LNEAIKDMEK…EDEYKEQINE (93 aa)) are a coiled coil. Low complexity predominate over residues 403–449 (TNTITSQSGSTIISNGASQPIEIPSPQPISEQQQIPPQQQQQQQQAQ). Disordered stretches follow at residues 403–468 (TNTI…PMGR) and 490–518 (STSS…LSKS). The segment covering 450-468 (VPPTSINQSSSPPVNPMGR) has biased composition (polar residues). Residues 490–513 (STSSLLTKDGNSTTSSNTSTSNSN) show a composition bias toward low complexity. A Rho-GAP domain is found at 533–716 (VELEVLIEND…NMIIDSLETK (184 aa)). The segment at 727 to 836 (PIIPDDENSD…VSSNGNNINS (110 aa)) is disordered. Residues 730-741 (PDDENSDDDDDD) are compositionally biased toward acidic residues. Low complexity predominate over residues 757–836 (NDINTTNINN…VSSNGNNINS (80 aa)).

It is found in the cytoplasm. Its subcellular location is the contractile vacuole. In terms of biological role, rho GTPase-activating protein involved in the signal transduction pathway. Regulator of the contractile vacuole network as well as involved in driving vacuole emptying. This is GTPase activating protein homolog 1 (mgp1) from Dictyostelium discoideum (Social amoeba).